The primary structure comprises 1051 residues: Transcription intermediary factor 1-alpha (1051 aa).

Residues 1–42 (MEVAVEKAAAAAAPAGGPAAAAPSGENEAESRQGPDSESGGE) are disordered. Lys-7 participates in a covalent cross-link: Glycyl lysine isopeptide (Lys-Gly) (interchain with G-Cter in SUMO2). Over residues 8 to 23 (AAAAAAPAGGPAAAAP) the composition is skewed to low complexity. The RING-type zinc finger occupies 52-77 (CAVCHQNIQSRVPKLLPCLHSFCQRC). Residues 94–115 (SAETPPPAPAPAPAPGSPAGGP) form a disordered region. Position 97 is a phosphothreonine (Thr-97). The span at 97-109 (TPPPAPAPAPAPG) shows a compositional bias: pro residues. Ser-110 is modified (phosphoserine). B box-type zinc fingers lie at residues 158 to 211 (KSNQ…VSPE) and 218 to 259 (QRPV…YQFI). 4 residues coordinate Zn(2+): Cys-163, Cys-166, Cys-187, and His-200. A Glycyl lysine isopeptide (Lys-Gly) (interchain with G-Cter in SUMO2) cross-link involves residue Lys-205. Zn(2+) contacts are provided by Cys-223, His-226, Cys-246, and His-251. Lys-276 is covalently cross-linked (Glycyl lysine isopeptide (Lys-Gly) (interchain with G-Cter in SUMO2)). Residues 289 to 359 (NQIQNRIIEI…AGLSKQLEHV (71 aa)) are a coiled coil. The tract at residues 429–457 (ESQPQMPKQNPVVEQSSQPPGGLPSNQLS) is disordered. Positions 431-457 (QPQMPKQNPVVEQSSQPPGGLPSNQLS) are enriched in polar residues. Residues Lys-436 and Lys-458 each participate in a glycyl lysine isopeptide (Lys-Gly) (interchain with G-Cter in SUMO2) cross-link. Residue Arg-469 is modified to Omega-N-methylarginine. Low complexity-rich tracts occupy residues 479 to 490 (AQRQQVQRRPAP) and 501 to 510 (PIQQPSISHQ). A disordered region spans residues 479 to 551 (AQRQQVQRRP…PSQNVPRQTT (73 aa)). Residues 526 to 535 (PNGPVLPPYP) are compositionally biased toward pro residues. Polar residues predominate over residues 538-551 (LRYSPSQNVPRQTT). Residues Lys-553 and Lys-642 each participate in a glycyl lysine isopeptide (Lys-Gly) (interchain with G-Cter in SUMO2) cross-link. Positions 644–713 (TGVDHAQPRP…PAGADSTHKV (70 aa)) are disordered. 3 positions are modified to phosphoserine: Ser-655, Ser-661, and Ser-668. Polar residues predominate over residues 655-667 (SNRTVQSPNSSVP). Residues 686–708 (SPSASSVGSRGSSGSSSKPAGAD) are compositionally biased toward low complexity. Residues Lys-703 and Lys-712 each participate in a glycyl lysine isopeptide (Lys-Gly) (interchain with G-Cter in SUMO2) cross-link. Residues Lys-724 and Lys-742 each participate in a glycyl lysine isopeptide (Lys-Gly) (interchain with G-Cter in SUMO); alternate cross-link. A Glycyl lysine isopeptide (Lys-Gly) (interchain with G-Cter in SUMO1); alternate cross-link involves residue Lys-724. Glycyl lysine isopeptide (Lys-Gly) (interchain with G-Cter in SUMO2); alternate cross-links involve residues Lys-724 and Lys-742. Residues Ser-745 and Ser-769 each carry the phosphoserine modification. A nuclear receptor binding site (NRBS) region spans residues 755-780 (NYPRSILTSLLLNSSQSSASEETVLR). Residues 771–827 (SSASEETVLRSDAPDSTGDQPGLHQENSSNGKSEWSDASQKSPVHVGETRKEDDPNE) are disordered. Positions 795-812 (QENSSNGKSEWSDASQKS) are enriched in polar residues. Lys-802 is covalently cross-linked (Glycyl lysine isopeptide (Lys-Gly) (interchain with G-Cter in SUMO2)). Ser-809 is subject to Phosphoserine. Lys-811 participates in a covalent cross-link: Glycyl lysine isopeptide (Lys-Gly) (interchain with G-Cter in SUMO2). A Phosphoserine modification is found at Ser-812. Thr-819 carries the phosphothreonine modification. A PHD-type zinc finger spans residues 827 to 874 (EDWCAVCQNGGELLCCEKCPKVFHLTCHVPTLTNFPSGEWICTFCRDL). The segment at 835–841 (NGGELLC) is interaction with histone H3 that is not methylated at 'Lys-4' (H3K4me0). Lys-876 is covalently cross-linked (Glycyl lysine isopeptide (Lys-Gly) (interchain with G-Cter in SUMO2)). The short motif at 892–908 (KRKSEGLTKLTPIDKRK) is the Nuclear localization signal element. Residues 900–1005 (KLTPIDKRKC…SYFEELLKNL (106 aa)) enclose the Bromo domain. Glycyl lysine isopeptide (Lys-Gly) (interchain with G-Cter in SUMO2) cross-links involve residues Lys-950 and Lys-993. Positions 1024–1051 (KFSDDSDDDFVQPRKKRLKSTEDRQLLK) are disordered. Residues Ser-1026 and Ser-1029 each carry the phosphoserine modification. Lys-1042 participates in a covalent cross-link: Glycyl lysine isopeptide (Lys-Gly) (interchain with G-Cter in SUMO2). A compositionally biased stretch (basic and acidic residues) spans 1042-1051 (KSTEDRQLLK). Phosphoserine is present on Ser-1043.

Interacts (via bromo domain) with histone H3 (via N-terminus), provided that it is not methylated at 'Lys-4' (H3K4me0). Does not interact with histone H3 that is methylated at 'Lys-4' (H3K4me1, H3K4me2 or H3K4me3). Interacts (via bromo domain) with histone H3 (via N-terminus) that is acetylated at 'Lys-23' (H3K23ac). Has the highest affinity for histone H3 that is both unmodified at 'Lys-4' (H3K4me0) and acetylated at 'Lys-23' (H3K23ac). Has very low affinity for histone H3 that is methylated at 'Lys-9' (H3K9me), or acetylated at both 'Lys-9' (H3K9ac) and 'Lys-14' (H3K14ac), or acetylated at 'Lys-27' (H3K27ac) (in vitro). Interacts with TRIM16. Interacts with NR3C2/MCR. Interacts with the ligand-binding domain of estrogen receptors (in vitro). Interaction with DNA-bound estrogen receptors requires the presence of estradiol. Interacts with AR, CARM1, KAT5/TIP60, NCOA2/GRIP1, BRD7, CBX1, CBX3 and CBX5. Part of a coactivator complex containing TRIM24, NCOA2/GRIP1 and CARM1. Interacts with p53/TP53 and PML. In terms of processing, sumoylated. Post-translationally, phosphorylated at Ser-768 by ATM kinase induces ubiquitination and degradation during DNA damage. Undergoes ubiquitination-mediated degradation in response to DNA damage. Detected in embryonic and adult liver. Detected in zygote and throughout embryogenesis (at protein level). Detected in all adult tissues, with the highest expression level in testis.

The protein resides in the nucleus. The protein localises to the cytoplasm. The catalysed reaction is S-ubiquitinyl-[E2 ubiquitin-conjugating enzyme]-L-cysteine + [acceptor protein]-L-lysine = [E2 ubiquitin-conjugating enzyme]-L-cysteine + N(6)-ubiquitinyl-[acceptor protein]-L-lysine.. It participates in protein modification; protein ubiquitination. Its function is as follows. Transcriptional coactivator that interacts with numerous nuclear receptors and coactivators and modulates the transcription of target genes. Interacts with chromatin depending on histone H3 modifications, having the highest affinity for histone H3 that is both unmodified at 'Lys-4' (H3K4me0) and acetylated at 'Lys-23' (H3K23ac). Has E3 protein-ubiquitin ligase activity. Promotes ubiquitination and proteasomal degradation of p53/TP53. Plays a role in the regulation of cell proliferation and apoptosis via its effects on p53/TP53 levels. Up-regulates ligand-dependent transcription activation by AR, GCR/NR3C1, thyroid hormone receptor (TR) and ESR1. Modulates transcription activation by retinoic acid (RA) receptors, such as RARA. Plays a role in regulating retinoic acid-dependent proliferation of hepatocytes. Required for normal transition from proliferating neonatal hepatocytes to quiescent adult hepatocytes. Transcriptional coactivator that interacts with numerous nuclear receptors and coactivators and modulates the transcription of target genes. Interacts with chromatin depending on histone H3 modifications, having the highest affinity for histone H3 that is both unmodified at 'Lys-4' (H3K4me0) and acetylated at 'Lys-23' (H3K23ac). Has E3 protein-ubiquitin ligase activity. During the DNA damage response, participates in an autoregulatory feedback loop with TP53. Early in response to DNA damage, ATM kinase phosphorylates TRIM24 leading to its ubiquitination and degradation. After sufficient DNA repair has occurred, TP53 activates TRIM24 transcription, ultimately leading to TRIM24-mediated TP53 ubiquitination and degradation. Plays a role in the regulation of cell proliferation and apoptosis, at least in part via its effects on p53/TP53 levels. Up-regulates ligand-dependent transcription activation by AR, GCR/NR3C1, thyroid hormone receptor (TR) and ESR1. Modulates transcription activation by retinoic acid (RA) receptors, including RARA. Plays a role in regulating retinoic acid-dependent proliferation of hepatocytes. Also participates in innate immunity by mediating the specific 'Lys-63'-linked ubiquitination of TRAF3 leading to activation of downstream signal transduction of the type I IFN pathway. Additionally, negatively regulates NLRP3/CASP1/IL-1beta-mediated pyroptosis and cell migration probably by ubiquitinating NLRP3. This Mus musculus (Mouse) protein is Transcription intermediary factor 1-alpha (Trim24).